A 1079-amino-acid polypeptide reads, in one-letter code: Adhesion G-protein coupled receptor F3 (1079 aa).

Positions 1 to 25 (MVCSAAPLLLLATTLPLLGSPVAQA) are cleaved as a signal peptide. Over 26–775 (SQPVSETGVR…EEPALALLTQ (750 aa)) the chain is Extracellular. Asparagine 188, asparagine 264, asparagine 301, asparagine 382, asparagine 441, and asparagine 648 each carry an N-linked (GlcNAc...) asparagine glycan. The 167-residue stretch at 599 to 765 (HPFAFSLPNV…SVLMSPHTVP (167 aa)) folds into the GAIN-B domain. Disulfide bonds link cysteine 715–cysteine 747 and cysteine 734–cysteine 749. Positions 715–765 (CVFWDHSLFQGRGGWSKEGCQAQVASASPTAQCLCQHLTAFSVLMSPHTVP) are GPS. The helical transmembrane segment at 776–796 (VGLGASILALLVCLGVYWLVW) threads the bilayer. Residues 797 to 811 (RVVVRNKISYFRHAA) lie on the Cytoplasmic side of the membrane. A helical transmembrane segment spans residues 812–832 (LLNMVFCLLAADTCFLGAPFL). Residues 833–851 (SPGPRSPLCLAAAFLCHFL) lie on the Extracellular side of the membrane. Residues 852–874 (YLATFFWMLAQALVLAHQLLFVF) form a helical membrane-spanning segment. Over 875-881 (HQLAKHR) the chain is Cytoplasmic. Residues 882–902 (VLPLMVLLGYLCPLGLAGVTL) traverse the membrane as a helical segment. Residues 903–928 (GLYLPQGQYLREGECWLDGKGGALYT) lie on the Extracellular side of the membrane. Residues 929–949 (FVGPVLAIIGVNGLVLAMAML) traverse the membrane as a helical segment. At 950–973 (KLLRPSLSEGPPAEKRQALLGVIK) the chain is on the cytoplasmic side. The chain crosses the membrane as a helical span at residues 974–994 (ALLILTPIFGLTWGLGLATLL). The Extracellular segment spans residues 995–1002 (EEVSTVPH). A helical transmembrane segment spans residues 1003 to 1023 (YIFTILNTLQGVFILLFGCLM). Topologically, residues 1024 to 1079 (DRKIQEALRKRFCRAQAPSSTISLVSCCLQILSCASKSMSEGIPWPSSEDMGTARS) are cytoplasmic.

The protein belongs to the G-protein coupled receptor 2 family. Adhesion G-protein coupled receptor (ADGR) subfamily. In terms of assembly, heterodimer of 2 chains generated by proteolytic processing; the large extracellular N-terminal fragment and the membrane-bound C-terminal fragment predominantly remain associated and non-covalently linked. Autoproteolytically processed at the GPS region of the GAIN-B domain; this cleavage modulates receptor activity.

It is found in the membrane. In terms of biological role, orphan receptor. This is Adhesion G-protein coupled receptor F3 (ADGRF3) from Homo sapiens (Human).